The chain runs to 273 residues: Release factor glutamine methyltransferase (273 aa).

S-adenosyl-L-methionine-binding positions include 109 to 113, D132, W159, and N176; that span reads GTGSG. 176 to 179 is a binding site for substrate; the sequence is NPPY.

The protein belongs to the protein N5-glutamine methyltransferase family. PrmC subfamily.

The enzyme catalyses L-glutaminyl-[peptide chain release factor] + S-adenosyl-L-methionine = N(5)-methyl-L-glutaminyl-[peptide chain release factor] + S-adenosyl-L-homocysteine + H(+). In terms of biological role, methylates the class 1 translation termination release factors RF1/PrfA and RF2/PrfB on the glutamine residue of the universally conserved GGQ motif. In Neisseria gonorrhoeae (strain ATCC 700825 / FA 1090), this protein is Release factor glutamine methyltransferase.